Reading from the N-terminus, the 188-residue chain is dCTP deaminase (188 aa).

DCTP-binding positions include 111 to 116, 135 to 137, Gln-156, Tyr-170, Lys-179, and Gln-180; these read KSTYAR and TLE. Catalysis depends on Glu-137, which acts as the Proton donor/acceptor.

It belongs to the dCTP deaminase family. In terms of assembly, homotrimer.

The enzyme catalyses dCTP + H2O + H(+) = dUTP + NH4(+). It functions in the pathway pyrimidine metabolism; dUMP biosynthesis; dUMP from dCTP (dUTP route): step 1/2. Its function is as follows. Catalyzes the deamination of dCTP to dUTP. In Rickettsia typhi (strain ATCC VR-144 / Wilmington), this protein is dCTP deaminase.